Reading from the N-terminus, the 183-residue chain is uncharacterized protein (183 aa).

Positions Met1 to Lys23 are disordered.

This is an uncharacterized protein from Saccharomyces cerevisiae (strain ATCC 204508 / S288c) (Baker's yeast).